The sequence spans 403 residues: S-adenosylmethionine synthase (403 aa).

Position 140–145 (140–145 (GKGSTD)) interacts with ATP.

Belongs to the AdoMet synthase 2 family. Requires Mg(2+) as cofactor.

It catalyses the reaction L-methionine + ATP + H2O = S-adenosyl-L-methionine + phosphate + diphosphate. Its pathway is amino-acid biosynthesis; S-adenosyl-L-methionine biosynthesis; S-adenosyl-L-methionine from L-methionine: step 1/1. Its function is as follows. Catalyzes the formation of S-adenosylmethionine from methionine and ATP. The chain is S-adenosylmethionine synthase from Sulfolobus acidocaldarius (strain ATCC 33909 / DSM 639 / JCM 8929 / NBRC 15157 / NCIMB 11770).